Consider the following 1364-residue polypeptide: DNA-directed RNA polymerase subunit beta' (1364 aa).

Residues 1-42 form a disordered region; it reads MTSSSSKSNKSRKSSKAAKDTTPVHESASRPLSKTPPPFRNH. The Zn(2+) site is built by cysteine 250, cysteine 317, cysteine 324, and cysteine 327.

The protein belongs to the RNA polymerase beta' chain family. RpoC2 subfamily. As to quaternary structure, in cyanobacteria the RNAP catalytic core is composed of 2 alpha, 1 beta, 1 beta', 1 gamma and 1 omega subunit. When a sigma factor is associated with the core the holoenzyme is formed, which can initiate transcription. Requires Zn(2+) as cofactor.

The catalysed reaction is RNA(n) + a ribonucleoside 5'-triphosphate = RNA(n+1) + diphosphate. Its function is as follows. DNA-dependent RNA polymerase catalyzes the transcription of DNA into RNA using the four ribonucleoside triphosphates as substrates. This Parasynechococcus marenigrum (strain WH8102) protein is DNA-directed RNA polymerase subunit beta'.